The chain runs to 542 residues: MEVREIPLPAATKLAADYITGAFPAESGFAYAQADDEAFCRRLAYLQGRTYDREGLADYLRAYHRRFSASVATMANIEKLRNERSVVIVGGQQAGLLTGPLYTIYKIITIIQLAKEQERKLGVPVVPLFWIAGEDHDIAEIDHVYVVEEGEVKKAAYPHKTNEKRMAADVLLDRMAAKEWIERVVKTYGETDVTNELLFFLSSCLDEARTFVDFFAAIVLRLFADHGLVVLNAGDAAVRPLERRFFAALIERHRDVTAAVLAQQEALRTLGYAPLIEIGRDAANLFYYDGRERSLLQYDEERGLFHNKAGTLVWTREELLELAETNPARLSNNVVTRPLMQEHLLPTLAFVAGPGEIAYWAELKEAFPLFDLEMPPVVPRLQATIVSRSLQTDLSDIGLEVADVLTGRLDEAKREWREATAQAPLASAFAKAKADIDAAHRPLRELGVAIDRGLEGLVAKNAAILQAQIEFLQHALERALLRKHETEWRKFWRIETSLRPNGALQERVWNVFYYINRYGFDFVEKLLAIRSPGNGMHKIVYM.

Positions 458 to 487 (VAKNAAILQAQIEFLQHALERALLRKHETE) form a coiled coil.

Belongs to the BshC family.

In terms of biological role, involved in bacillithiol (BSH) biosynthesis. May catalyze the last step of the pathway, the addition of cysteine to glucosamine malate (GlcN-Mal) to generate BSH. The protein is Putative cysteine ligase BshC of Geobacillus kaustophilus (strain HTA426).